The primary structure comprises 601 residues: Alpha-terpineol synthase, chloroplastic (601 aa).

A chloroplast-targeting transit peptide spans 1–47 (MSTISIHHVGILRNPLHSKSKRASINKPWSLSLPRSSSASRLVEPCR). The Mn(2+) site is built by Asp357 and Asp361. The DDXXD motif motif lies at 357-361 (DDVYD). Homodimerization regions lie at residues 363-369 (YGTLDEL) and 435-471 (EAEWYQSGYTPSLEEYLTIAKISIGSLPILLSVELSL). Residues Asp499 and Glu507 each contribute to the Mn(2+) site.

Belongs to the terpene synthase family. Homodimer. It depends on Mn(2+) as a cofactor. Requires Mg(2+) as cofactor.

It is found in the plastid. The protein resides in the chloroplast. It catalyses the reaction (2E)-geranyl diphosphate + H2O = (S)-alpha-terpineol + diphosphate. It carries out the reaction (2E)-geranyl diphosphate + H2O = (R)-alpha-terpineol + diphosphate. It functions in the pathway secondary metabolite biosynthesis; terpenoid biosynthesis. Involved in the biosynthesis of phenolic monoterpenes natural products. Monoterpene synthase which catalyzes the conversion of geranyl diphosphate (GPP) to alpha-terpineol (isomer is not determined). This Thymus caespititius (Cretan thyme) protein is Alpha-terpineol synthase, chloroplastic.